A 276-amino-acid polypeptide reads, in one-letter code: uncharacterized protein (276 aa).

An N-terminal signal peptide occupies residues 1 to 29; it reads MKSHVRSFKTYIRDEIIKKGGWVNAHAHA.

It belongs to the metallo-dependent hydrolases superfamily.

This is an uncharacterized protein from Haemophilus influenzae (strain ATCC 51907 / DSM 11121 / KW20 / Rd).